The sequence spans 692 residues: Elongation factor G (692 aa).

Residues 8–282 (EKTRNIGIMA…AIVDYLPAPT (275 aa)) enclose the tr-type G domain. Residues 17–24 (AHIDAGKT), 81–85 (DTPGH), and 135–138 (NKMD) contribute to the GTP site.

Belongs to the TRAFAC class translation factor GTPase superfamily. Classic translation factor GTPase family. EF-G/EF-2 subfamily.

The protein localises to the cytoplasm. Catalyzes the GTP-dependent ribosomal translocation step during translation elongation. During this step, the ribosome changes from the pre-translocational (PRE) to the post-translocational (POST) state as the newly formed A-site-bound peptidyl-tRNA and P-site-bound deacylated tRNA move to the P and E sites, respectively. Catalyzes the coordinated movement of the two tRNA molecules, the mRNA and conformational changes in the ribosome. The polypeptide is Elongation factor G (Pelotomaculum thermopropionicum (strain DSM 13744 / JCM 10971 / SI)).